Consider the following 549-residue polypeptide: Cation/acetate symporter ActP (549 aa).

13 helical membrane passes run 33-53, 77-97, 103-123, 148-168, 183-203, 206-226, 262-282, 303-323, 355-375, 404-424, 428-448, 464-484, and 493-513; these read WQAIIMFLIFVVFTLGITYWA, LAIAGDYMSAASFLGISALVF, GLIYSLGFLVGWPIILFLIAE, ILSACGSLVVVALYLIAQMVG, IAVVLVGVLMMMYVLFGGMLA, WVQIIKAVLLLFGASFMAFMV, ISALSLGLGLMFGTAGLPHIL, GFMGYFYILTFIIGFGAIMLV, LFLGFISAVAFATILAVVAGL, VSKITVLVLGVIAIILGFLFE, IAFMVGLAFAIAASCNFPIIL, GGWLGLLTAVVLMILGPTIWV, and IFPYEYPALFSISVAFLGIWF.

It belongs to the sodium:solute symporter (SSF) (TC 2.A.21) family.

It localises to the cell inner membrane. Functionally, transports acetate. The sequence is that of Cation/acetate symporter ActP from Salmonella paratyphi C (strain RKS4594).